We begin with the raw amino-acid sequence, 68 residues long: Large ribosomal subunit protein uL30 (68 aa).

The protein belongs to the universal ribosomal protein uL30 family. In terms of assembly, part of the 50S ribosomal subunit.

The chain is Large ribosomal subunit protein uL30 from Bartonella quintana (strain Toulouse) (Rochalimaea quintana).